The sequence spans 259 residues: Bisphosphoglycerate mutase (259 aa).

Residue Ser2 is modified to N-acetylserine. Residues 10 to 17 (RHGEGAWN), 23 to 24 (CS), Arg62, 89 to 92 (ERHY), Arg100, and 116 to 117 (RR) contribute to the substrate site. Catalysis depends on His11, which acts as the Tele-phosphohistidine intermediate. The active-site Proton donor/acceptor is Glu89. Residue Thr122 is modified to Phosphothreonine. 189-190 (GN) provides a ligand contact to substrate.

It belongs to the phosphoglycerate mutase family. BPG-dependent PGAM subfamily. In terms of assembly, homodimer. Expressed in red blood cells.

The enzyme catalyses (2R)-3-phospho-glyceroyl phosphate = (2R)-2,3-bisphosphoglycerate + H(+). The catalysed reaction is (2R)-2-phosphoglycerate = (2R)-3-phosphoglycerate. With respect to regulation, at alkaline pH BPGM favors the synthase reaction; however, at lower pH the phosphatase reaction is dominant. Inhibited by citrate. Functionally, plays a major role in regulating hemoglobin oxygen affinity by controlling the levels of its allosteric effector 2,3-bisphosphoglycerate (2,3-BPG). Also exhibits mutase (EC 5.4.2.11) activity. This is Bisphosphoglycerate mutase (BPGM) from Oryctolagus cuniculus (Rabbit).